The primary structure comprises 34 residues: Trypsin inhibitor (34 aa).

2 disulfides stabilise this stretch: Cys-7–Cys-29 and Cys-11–Cys-25.

Its subcellular location is the secreted. Functionally, inhibits trypsin. The polypeptide is Trypsin inhibitor (Veronica hederifolia (Ivy-leaved speedwell)).